The following is a 290-amino-acid chain: ATP synthase gamma chain (290 aa).

It belongs to the ATPase gamma chain family. As to quaternary structure, F-type ATPases have 2 components, CF(1) - the catalytic core - and CF(0) - the membrane proton channel. CF(1) has five subunits: alpha(3), beta(3), gamma(1), delta(1), epsilon(1). CF(0) has three main subunits: a, b and c.

It localises to the cell inner membrane. Produces ATP from ADP in the presence of a proton gradient across the membrane. The gamma chain is believed to be important in regulating ATPase activity and the flow of protons through the CF(0) complex. This chain is ATP synthase gamma chain, found in Dictyoglomus turgidum (strain DSM 6724 / Z-1310).